The sequence spans 39 residues: Photosystem II reaction center protein Psb30 (39 aa).

The helical transmembrane segment at 12-32 (IFQLTFVGLIVIAGPIVIAVL) threads the bilayer.

This sequence belongs to the Psb30/Ycf12 family. As to quaternary structure, PSII is composed of 1 copy each of membrane proteins PsbA, PsbB, PsbC, PsbD, PsbE, PsbF, PsbH, PsbI, PsbJ, PsbK, PsbL, PsbM, PsbT, PsbX, PsbY, PsbZ, Psb30/Ycf12, peripheral proteins PsbO, CyanoQ (PsbQ), PsbU, PsbV and a large number of cofactors. It forms dimeric complexes.

The protein resides in the cellular thylakoid membrane. Its function is as follows. A core subunit of photosystem II (PSII), probably helps stabilize the reaction center. The sequence is that of Photosystem II reaction center protein Psb30 from Crocosphaera subtropica (strain ATCC 51142 / BH68) (Cyanothece sp. (strain ATCC 51142)).